The chain runs to 51 residues: Ovomucoid (51 aa).

One can recognise a Kazal-like domain in the interval 3–51 (VDCSGYPKPDCTLESFPLCGSDNQTYSNKCAFCNAAVERNVTLRHLGEC). Disulfide bonds link Cys5-Cys35, Cys13-Cys32, and Cys21-Cys51. Asn42 carries an N-linked (GlcNAc...) asparagine glycan.

The protein resides in the secreted. The protein is Ovomucoid of Rhynchotus rufescens (Red-winged tinamou).